Reading from the N-terminus, the 602-residue chain is Exo-poly-alpha-D-galacturonosidase (602 aa).

The signal sequence occupies residues M1–A27. Residues A32–P149 form the Fibronectin type-III domain. D395 (proton donor) is an active-site residue. The active site involves H428.

It belongs to the glycosyl hydrolase 28 family.

Its subcellular location is the secreted. It catalyses the reaction [(1-&gt;4)-alpha-D-galacturonosyl](n) + H2O = alpha-D-galacturonosyl-(1-&gt;4)-D-galacturonate + [(1-&gt;4)-alpha-D-galacturonosyl](n-2). Functionally, contributes significantly to bacterial utilization of polygalacturonate and the induction of pectate lyase in the presence of extracellular pectic polymers. This is Exo-poly-alpha-D-galacturonosidase (pehX) from Dickeya chrysanthemi (Pectobacterium chrysanthemi).